Here is a 341-residue protein sequence, read N- to C-terminus: L-threonine 3-dehydrogenase (341 aa).

C38 is a binding site for Zn(2+). Catalysis depends on charge relay system residues T40 and H43. Residues H63, E64, C93, C96, C99, and C107 each contribute to the Zn(2+) site. Residues I175, D195, R200, 262-264 (LGI), and 286-287 (IY) contribute to the NAD(+) site.

It belongs to the zinc-containing alcohol dehydrogenase family. As to quaternary structure, homotetramer. Zn(2+) serves as cofactor.

Its subcellular location is the cytoplasm. The catalysed reaction is L-threonine + NAD(+) = (2S)-2-amino-3-oxobutanoate + NADH + H(+). Its pathway is amino-acid degradation; L-threonine degradation via oxydo-reductase pathway; glycine from L-threonine: step 1/2. Catalyzes the NAD(+)-dependent oxidation of L-threonine to 2-amino-3-ketobutyrate. This chain is L-threonine 3-dehydrogenase, found in Serratia proteamaculans (strain 568).